The chain runs to 429 residues: Light-independent protochlorophyllide reductase subunit N (429 aa).

Residues cysteine 32, cysteine 57, and cysteine 118 each contribute to the [4Fe-4S] cluster site.

The protein belongs to the BchN/ChlN family. As to quaternary structure, protochlorophyllide reductase is composed of three subunits; BchL, BchN and BchB. Forms a heterotetramer of two BchB and two BchN subunits. [4Fe-4S] cluster is required as a cofactor.

It carries out the reaction chlorophyllide a + oxidized 2[4Fe-4S]-[ferredoxin] + 2 ADP + 2 phosphate = protochlorophyllide a + reduced 2[4Fe-4S]-[ferredoxin] + 2 ATP + 2 H2O. It participates in porphyrin-containing compound metabolism; bacteriochlorophyll biosynthesis (light-independent). Component of the dark-operative protochlorophyllide reductase (DPOR) that uses Mg-ATP and reduced ferredoxin to reduce ring D of protochlorophyllide (Pchlide) to form chlorophyllide a (Chlide). This reaction is light-independent. The NB-protein (BchN-BchB) is the catalytic component of the complex. The polypeptide is Light-independent protochlorophyllide reductase subunit N (Rhodopseudomonas palustris (strain TIE-1)).